The chain runs to 346 residues: Putative F-box/kelch-repeat protein At1g27420 (346 aa).

The F-box domain occupies 9–56 (PIIPGLTDDVAELCVSKIPRSSFQITSQVCRRWRSFLRSQHFAAVRKL). Kelch repeat units lie at residues 62–109 (EFLC…VLDG), 111–167 (KIVF…EVNG), 168–215 (LLYV…AFSS), 217–257 (LYAV…VRNK), and 259–300 (YFMD…VWNN).

This Arabidopsis thaliana (Mouse-ear cress) protein is Putative F-box/kelch-repeat protein At1g27420.